The primary structure comprises 28 residues: GLMDALKGAAKNLFASALDKLKCKVTGC.

An intrachain disulfide couples Cys-23 to Cys-28.

Expressed by the skin glands.

It localises to the secreted. In terms of biological role, has antibacterial activity. The protein is Ranatuerin-2LTa of Rana latastei (Italian agile frog).